We begin with the raw amino-acid sequence, 150 residues long: MQVILLDKVANLGSLGDQVNVKAGYARNFLVPQGKAVPATKKNVEFFEARRAELEAKLAGVLAAAEARATKINELVSVTIASKAGDEGKLFGSIGTRDIADAVTAAGVEVAKSEVRLPNGVLRTTGDHEVHFQVHSDVFAKLNVIVVPEA.

Belongs to the bacterial ribosomal protein bL9 family.

Binds to the 23S rRNA. In Yersinia enterocolitica serotype O:8 / biotype 1B (strain NCTC 13174 / 8081), this protein is Large ribosomal subunit protein bL9.